A 364-amino-acid polypeptide reads, in one-letter code: UDP-N-acetylglucosamine--N-acetylmuramyl-(pentapeptide) pyrophosphoryl-undecaprenol N-acetylglucosamine transferase 1 (364 aa).

UDP-N-acetyl-alpha-D-glucosamine is bound by residues 10–12 (TGG), Asn-124, Ser-195, Ile-250, and Gln-295.

This sequence belongs to the glycosyltransferase 28 family. MurG subfamily.

It is found in the cell membrane. It carries out the reaction di-trans,octa-cis-undecaprenyl diphospho-N-acetyl-alpha-D-muramoyl-L-alanyl-D-glutamyl-meso-2,6-diaminopimeloyl-D-alanyl-D-alanine + UDP-N-acetyl-alpha-D-glucosamine = di-trans,octa-cis-undecaprenyl diphospho-[N-acetyl-alpha-D-glucosaminyl-(1-&gt;4)]-N-acetyl-alpha-D-muramoyl-L-alanyl-D-glutamyl-meso-2,6-diaminopimeloyl-D-alanyl-D-alanine + UDP + H(+). It functions in the pathway cell wall biogenesis; peptidoglycan biosynthesis. Cell wall formation. Catalyzes the transfer of a GlcNAc subunit on undecaprenyl-pyrophosphoryl-MurNAc-pentapeptide (lipid intermediate I) to form undecaprenyl-pyrophosphoryl-MurNAc-(pentapeptide)GlcNAc (lipid intermediate II). In Bacillus thuringiensis subsp. konkukian (strain 97-27), this protein is UDP-N-acetylglucosamine--N-acetylmuramyl-(pentapeptide) pyrophosphoryl-undecaprenol N-acetylglucosamine transferase 1.